The chain runs to 407 residues: Peptidase T (407 aa).

H81 is a binding site for Zn(2+). D83 is an active-site residue. Residue D142 coordinates Zn(2+). Catalysis depends on E176, which acts as the Proton acceptor. E177, D199, and H381 together coordinate Zn(2+).

This sequence belongs to the peptidase M20B family. Requires Zn(2+) as cofactor.

The protein resides in the cytoplasm. It catalyses the reaction Release of the N-terminal residue from a tripeptide.. Cleaves the N-terminal amino acid of tripeptides. The polypeptide is Peptidase T (Streptococcus pneumoniae (strain JJA)).